The sequence spans 165 residues: uncharacterized protein (165 aa).

Belongs to the SixA phosphatase family.

This is an uncharacterized protein from Picosynechococcus sp. (strain ATCC 27264 / PCC 7002 / PR-6) (Agmenellum quadruplicatum).